The chain runs to 100 residues: Urease subunit gamma (100 aa).

Belongs to the urease gamma subunit family. Heterotrimer of UreA (gamma), UreB (beta) and UreC (alpha) subunits. Three heterotrimers associate to form the active enzyme.

The protein resides in the cytoplasm. The catalysed reaction is urea + 2 H2O + H(+) = hydrogencarbonate + 2 NH4(+). The protein operates within nitrogen metabolism; urea degradation; CO(2) and NH(3) from urea (urease route): step 1/1. This is Urease subunit gamma from Citrobacter koseri (strain ATCC BAA-895 / CDC 4225-83 / SGSC4696).